A 156-amino-acid polypeptide reads, in one-letter code: Protein E6 (156 aa).

Zinc fingers lie at residues 42-78 and 115-151; these read CHYCYKILSVLDIYAFDQSCLYLSWGEGGPTGICSQC and CVRCLALLQSVEKDYILREDLSVHRIGGIWRGTCVRC.

Belongs to the papillomaviridae E6 protein family. In terms of assembly, forms homodimers. Interacts with ubiquitin-protein ligase UBE3A/E6-AP; this interaction stimulates UBE3A ubiquitin activity. Interacts with host BAK1.

It localises to the host cytoplasm. The protein resides in the host nucleus. Its function is as follows. Plays a major role in the induction and maintenance of cellular transformation. E6 associates with host UBE3A/E6-AP ubiquitin-protein ligase and modulates its activity. Protects host keratinocytes from apoptosis by mediating the degradation of host BAK1. May also inhibit host immune response. This is Protein E6 from Homo sapiens (Human).